A 195-amino-acid polypeptide reads, in one-letter code: Packaging protein 2 (195 aa).

Residues M1–R124 are disordered. Acidic residues predominate over residues T15–D53. The segment covering E54 to P63 has biased composition (low complexity).

This sequence belongs to the adenoviridae splicing factor family. In terms of assembly, part of a genome packaging complex composed of packaging proteins 1, 2 and 3; this complex specifically binds to the packaging sequence on the left end of viral genomic DNA and performs packaging of the viral genome. Self-assembles into higher-order structures.

It is found in the host nucleus. Component of the packaging machinery which encapsidates the viral DNA into preformed capsids and transcriptional activator of the viral major late promoter (MLP). Binds, along with packaging proteins 1 and 3, to the specific packaging sequence on the left end of viral genomic DNA and plays an active role in packaging of the viral genome into preformed capsids. Specifically binds to the 5'-TTTG-3' nucleotides of the repeats making up the packaging sequence. Forms a transcription factor called DEF-A through cooperative binding with packaging protein 1. DEF-A binds to downstream elements of the major late promoter (MLP) and stimulates transcription from the MLP after initiation of viral DNA replication. Simultaneously suppresses early gene expression and is thus likely to participate in the early-late switch in the expression pattern of the late viral proteins. May as well enhance transcription from IVa2 and pIX promoters. The sequence is that of Packaging protein 2 from Homo sapiens (Human).